We begin with the raw amino-acid sequence, 100 residues long: uncharacterized protein (100 aa).

This is an uncharacterized protein from Rhizobium leguminosarum bv. phaseoli.